A 274-amino-acid chain; its full sequence is Eukaryotic translation initiation factor 3 subunit G (274 aa).

A phosphoserine mark is found at Ser146, Ser164, and Ser171. Residues 149 to 170 (ANTSAAATPEPDTDASGKYVPP) form a disordered region. The 80-residue stretch at 191 to 270 (TTLKISQLNT…LILHLEWPKK (80 aa)) folds into the RRM domain.

This sequence belongs to the eIF-3 subunit G family. As to quaternary structure, component of the eukaryotic translation initiation factor 3 (eIF-3) complex.

The protein resides in the cytoplasm. Functionally, RNA-binding component of the eukaryotic translation initiation factor 3 (eIF-3) complex, which is involved in protein synthesis of a specialized repertoire of mRNAs and, together with other initiation factors, stimulates binding of mRNA and methionyl-tRNAi to the 40S ribosome. The eIF-3 complex specifically targets and initiates translation of a subset of mRNAs involved in cell proliferation. This subunit can bind 18S rRNA. This Meyerozyma guilliermondii (strain ATCC 6260 / CBS 566 / DSM 6381 / JCM 1539 / NBRC 10279 / NRRL Y-324) (Yeast) protein is Eukaryotic translation initiation factor 3 subunit G.